Consider the following 72-residue polypeptide: DNA-directed RNA polymerase subunit omega (72 aa).

This sequence belongs to the RNA polymerase subunit omega family. In terms of assembly, the RNAP catalytic core consists of 2 alpha, 1 beta, 1 beta' and 1 omega subunit. When a sigma factor is associated with the core the holoenzyme is formed, which can initiate transcription.

It catalyses the reaction RNA(n) + a ribonucleoside 5'-triphosphate = RNA(n+1) + diphosphate. Its function is as follows. Promotes RNA polymerase assembly. Latches the N- and C-terminal regions of the beta' subunit thereby facilitating its interaction with the beta and alpha subunits. This is DNA-directed RNA polymerase subunit omega from Clostridium botulinum (strain Langeland / NCTC 10281 / Type F).